Consider the following 480-residue polypeptide: Protein nucleotidyltransferase YdiU (480 aa).

Residues Gly-87, Gly-89, Arg-90, Lys-110, Asp-122, Gly-123, Arg-173, and Arg-180 each coordinate ATP. Asp-245 (proton acceptor) is an active-site residue. Asn-246 and Asp-255 together coordinate Mg(2+). ATP is bound at residue Asp-255.

This sequence belongs to the SELO family. It depends on Mg(2+) as a cofactor. Mn(2+) is required as a cofactor.

It carries out the reaction L-seryl-[protein] + ATP = 3-O-(5'-adenylyl)-L-seryl-[protein] + diphosphate. The catalysed reaction is L-threonyl-[protein] + ATP = 3-O-(5'-adenylyl)-L-threonyl-[protein] + diphosphate. The enzyme catalyses L-tyrosyl-[protein] + ATP = O-(5'-adenylyl)-L-tyrosyl-[protein] + diphosphate. It catalyses the reaction L-histidyl-[protein] + UTP = N(tele)-(5'-uridylyl)-L-histidyl-[protein] + diphosphate. It carries out the reaction L-seryl-[protein] + UTP = O-(5'-uridylyl)-L-seryl-[protein] + diphosphate. The catalysed reaction is L-tyrosyl-[protein] + UTP = O-(5'-uridylyl)-L-tyrosyl-[protein] + diphosphate. Nucleotidyltransferase involved in the post-translational modification of proteins. It can catalyze the addition of adenosine monophosphate (AMP) or uridine monophosphate (UMP) to a protein, resulting in modifications known as AMPylation and UMPylation. This chain is Protein nucleotidyltransferase YdiU, found in Jannaschia sp. (strain CCS1).